Reading from the N-terminus, the 415-residue chain is Tyrosine--tRNA ligase (415 aa).

The 'HIGH' region signature appears at 54–63; it reads PTGTDIHIGH. A 'KMSKS' region motif is present at residues 248–252; sequence KMSKS. Position 251 (Lys-251) interacts with ATP. An S4 RNA-binding domain is found at 351–415; sequence AKAFYLFSKM…GKKKFLRVST (65 aa).

Belongs to the class-I aminoacyl-tRNA synthetase family. TyrS type 2 subfamily. Homodimer.

The protein localises to the cytoplasm. The catalysed reaction is tRNA(Tyr) + L-tyrosine + ATP = L-tyrosyl-tRNA(Tyr) + AMP + diphosphate + H(+). Its function is as follows. Catalyzes the attachment of tyrosine to tRNA(Tyr) in a two-step reaction: tyrosine is first activated by ATP to form Tyr-AMP and then transferred to the acceptor end of tRNA(Tyr). The sequence is that of Tyrosine--tRNA ligase from Prochlorococcus marinus (strain NATL2A).